We begin with the raw amino-acid sequence, 132 residues long: Small ribosomal subunit protein eS24 (132 aa).

The interval 91–132 (LATHGLYEKKKTSRKQRTERQNRMKKVRSIKKASVGAAGKKN) is disordered. Over residues 96-112 (LYEKKKTSRKQRTERQN) the composition is skewed to basic and acidic residues.

Belongs to the eukaryotic ribosomal protein eS24 family. As to quaternary structure, component of the small ribosomal subunit.

It localises to the cytoplasm. Its function is as follows. Component of the small ribosomal subunit. The ribosome is a large ribonucleoprotein complex responsible for the synthesis of proteins in the cell. Required for processing of pre-rRNA and maturation of 40S ribosomal subunits. This Oryzias latipes (Japanese rice fish) protein is Small ribosomal subunit protein eS24 (rps24).